A 200-amino-acid polypeptide reads, in one-letter code: MARYTGPSWKVSRRLGISLSGTGKELERRPYAPGQHGPTQRKKISEYGLQQAEKQKLRHMYGLTERQFKNTFNKAGKLQGKHGENFMILLEQRLDNIVYRLGLARTRRAARQLVNHGHITVDGKRVDIPSYQVSVGQVISVREKSAKNSAIAESLEVSSFVPEYVTFDAETLTGSLNRLPERSELAAEINEAFIVEFYSR.

The interval Thr22 to Lys43 is disordered. Residues Gln92–Glu170 enclose the S4 RNA-binding domain.

The protein belongs to the universal ribosomal protein uS4 family. As to quaternary structure, part of the 30S ribosomal subunit. Contacts protein S5. The interaction surface between S4 and S5 is involved in control of translational fidelity.

Functionally, one of the primary rRNA binding proteins, it binds directly to 16S rRNA where it nucleates assembly of the body of the 30S subunit. With S5 and S12 plays an important role in translational accuracy. The chain is Small ribosomal subunit protein uS4 from Listeria innocua serovar 6a (strain ATCC BAA-680 / CLIP 11262).